The primary structure comprises 182 residues: Ribosome maturation factor RimM (182 aa).

The region spanning 103 to 182 (GDDYYWKDLM…VIEADWDPGF (80 aa)) is the PRC barrel domain.

The protein belongs to the RimM family. Binds ribosomal protein uS19.

It localises to the cytoplasm. Its function is as follows. An accessory protein needed during the final step in the assembly of 30S ribosomal subunit, possibly for assembly of the head region. Essential for efficient processing of 16S rRNA. May be needed both before and after RbfA during the maturation of 16S rRNA. It has affinity for free ribosomal 30S subunits but not for 70S ribosomes. The protein is Ribosome maturation factor RimM of Serratia proteamaculans (strain 568).